A 235-amino-acid polypeptide reads, in one-letter code: MDARERLIVGLDVPTIGEAERLVSTLGDDILFYKIGYQLVFAGGLEFARDLAASGKKIFLDMKLLDIDNTVASGVENIAKMGMSMLTLHAYPKAMRAAVEAAAGSGLCLLGVTVLTSMDAEDLAEAGYNQDPHSLVLSRAGQARAAGMGGIVCSAAEAAEVREVVGPDMAIVTPGIRPTGSDKGDQKRVMTPFDALKAGSTHLVVGRPIVKAPDPKQAARAVLNEMVGALWPANR.

Substrate is bound by residues D12, K34, 61–70 (DMKLLDIDNT), T116, R177, Q186, G206, and R207. Residue K63 is the Proton donor of the active site.

Belongs to the OMP decarboxylase family. Type 1 subfamily. In terms of assembly, homodimer.

The enzyme catalyses orotidine 5'-phosphate + H(+) = UMP + CO2. Its pathway is pyrimidine metabolism; UMP biosynthesis via de novo pathway; UMP from orotate: step 2/2. Its function is as follows. Catalyzes the decarboxylation of orotidine 5'-monophosphate (OMP) to uridine 5'-monophosphate (UMP). The chain is Orotidine 5'-phosphate decarboxylase from Rhizobium etli (strain ATCC 51251 / DSM 11541 / JCM 21823 / NBRC 15573 / CFN 42).